Consider the following 311-residue polypeptide: HPr kinase/phosphorylase (311 aa).

Residues His-139 and Lys-160 contribute to the active site. An ATP-binding site is contributed by 154-161 (GDSGVGKS). Mg(2+) is bound at residue Ser-161. Asp-178 serves as the catalytic Proton acceptor; for phosphorylation activity. Proton donor; for dephosphorylation activity. The tract at residues 202–211 (LEIRGIGIID) is important for the catalytic mechanism of both phosphorylation and dephosphorylation. Mg(2+) is bound at residue Glu-203. Residue Arg-244 is part of the active site. An important for the catalytic mechanism of dephosphorylation region spans residues 265 to 270 (PVKTGR).

Belongs to the HPrK/P family. In terms of assembly, homohexamer. It depends on Mg(2+) as a cofactor.

It catalyses the reaction [HPr protein]-L-serine + ATP = [HPr protein]-O-phospho-L-serine + ADP + H(+). The catalysed reaction is [HPr protein]-O-phospho-L-serine + phosphate + H(+) = [HPr protein]-L-serine + diphosphate. In terms of biological role, catalyzes the ATP- as well as the pyrophosphate-dependent phosphorylation of a specific serine residue in HPr, a phosphocarrier protein of the phosphoenolpyruvate-dependent sugar phosphotransferase system (PTS). HprK/P also catalyzes the pyrophosphate-producing, inorganic phosphate-dependent dephosphorylation (phosphorolysis) of seryl-phosphorylated HPr (P-Ser-HPr). The two antagonistic activities of HprK/P are regulated by several intracellular metabolites, which change their concentration in response to the absence or presence of rapidly metabolisable carbon sources (glucose, fructose, etc.) in the growth medium. Therefore, by controlling the phosphorylation state of HPr, HPrK/P is a sensor enzyme that plays a major role in the regulation of carbon metabolism and sugar transport: it mediates carbon catabolite repression (CCR), and regulates PTS-catalyzed carbohydrate uptake and inducer exclusion. The sequence is that of HPr kinase/phosphorylase from Levilactobacillus brevis (strain ATCC 367 / BCRC 12310 / CIP 105137 / JCM 1170 / LMG 11437 / NCIMB 947 / NCTC 947) (Lactobacillus brevis).